The primary structure comprises 541 residues: 2-succinyl-5-enolpyruvyl-6-hydroxy-3-cyclohexene-1-carboxylate synthase (541 aa).

This sequence belongs to the TPP enzyme family. MenD subfamily. In terms of assembly, homodimer. It depends on Mg(2+) as a cofactor. Mn(2+) serves as cofactor. Thiamine diphosphate is required as a cofactor.

It catalyses the reaction isochorismate + 2-oxoglutarate + H(+) = 5-enolpyruvoyl-6-hydroxy-2-succinyl-cyclohex-3-ene-1-carboxylate + CO2. Its pathway is quinol/quinone metabolism; 1,4-dihydroxy-2-naphthoate biosynthesis; 1,4-dihydroxy-2-naphthoate from chorismate: step 2/7. The protein operates within quinol/quinone metabolism; menaquinone biosynthesis. Its function is as follows. Catalyzes the thiamine diphosphate-dependent decarboxylation of 2-oxoglutarate and the subsequent addition of the resulting succinic semialdehyde-thiamine pyrophosphate anion to isochorismate to yield 2-succinyl-5-enolpyruvyl-6-hydroxy-3-cyclohexene-1-carboxylate (SEPHCHC). In Leuconostoc mesenteroides subsp. mesenteroides (strain ATCC 8293 / DSM 20343 / BCRC 11652 / CCM 1803 / JCM 6124 / NCDO 523 / NBRC 100496 / NCIMB 8023 / NCTC 12954 / NRRL B-1118 / 37Y), this protein is 2-succinyl-5-enolpyruvyl-6-hydroxy-3-cyclohexene-1-carboxylate synthase.